Consider the following 106-residue polypeptide: Ig kappa chain C region, A allele (106 aa).

Positions 5–102 (PTVSIFPPSM…SSSPVVKSFN (98 aa)) constitute an Ig-like domain. Cys26 and Cys86 are oxidised to a cystine.

The polypeptide is Ig kappa chain C region, A allele (Rattus norvegicus (Rat)).